The sequence spans 662 residues: Glycogen debranching enzyme (662 aa).

The active-site Nucleophile is the Asp-338. Glu-373 functions as the Proton donor in the catalytic mechanism.

The protein belongs to the glycosyl hydrolase 13 family.

It carries out the reaction Hydrolysis of (1-&gt;6)-alpha-D-glucosidic linkages to branches with degrees of polymerization of three or four glucose residues in limit dextrin.. It functions in the pathway glycan degradation; glycogen degradation. In terms of biological role, removes maltotriose and maltotetraose chains that are attached by 1,6-alpha-linkage to the limit dextrin main chain, generating a debranched limit dextrin. This Yersinia pestis protein is Glycogen debranching enzyme.